Consider the following 150-residue polypeptide: Macrodomain Ter protein (150 aa).

This sequence belongs to the MatP family. In terms of assembly, homodimer.

Its subcellular location is the cytoplasm. Its function is as follows. Required for spatial organization of the terminus region of the chromosome (Ter macrodomain) during the cell cycle. Prevents early segregation of duplicated Ter macrodomains during cell division. Binds specifically to matS, which is a 13 bp signature motif repeated within the Ter macrodomain. The chain is Macrodomain Ter protein from Escherichia coli (strain SMS-3-5 / SECEC).